The following is a 412-amino-acid chain: Transcription factor IIIA (412 aa).

Residues methionine 1–serine 20 form a disordered region. The span at serine 9–serine 20 shows a compositional bias: low complexity. 7 consecutive C2H2-type zinc fingers follow at residues tyrosine 25 to histidine 49, tyrosine 55 to histidine 79, phenylalanine 85 to histidine 107, phenylalanine 111 to histidine 136, leucine 140 to histidine 162, tyrosine 169 to histidine 194, and leucine 197 to histidine 219. The segment at tryptophan 228–histidine 252 adopts a C2H2-type 8; degenerate zinc-finger fold. Residues leucine 285–serine 316 are disordered. The segment covering glutamate 293–leucine 303 has biased composition (acidic residues). The C2H2-type 9 zinc finger occupies isoleucine 345–histidine 369.

It localises to the nucleus. Its function is as follows. Transcription factor required for transcription of 5S rRNA by RNA polymerase III. The sequence is that of Transcription factor IIIA (PZF1) from Candida albicans (strain SC5314 / ATCC MYA-2876) (Yeast).